The primary structure comprises 485 residues: Cysteine--tRNA ligase (485 aa).

C27 provides a ligand contact to Zn(2+). Positions 29-39 match the 'HIGH' region motif; it reads ITAYDLCHLGH. Residues C208, H233, and E237 each contribute to the Zn(2+) site. The 'KMSKS' region signature appears at 265 to 269; it reads KMSKS. K268 contributes to the ATP binding site.

The protein belongs to the class-I aminoacyl-tRNA synthetase family. As to quaternary structure, monomer. It depends on Zn(2+) as a cofactor.

The protein resides in the cytoplasm. The catalysed reaction is tRNA(Cys) + L-cysteine + ATP = L-cysteinyl-tRNA(Cys) + AMP + diphosphate. The protein is Cysteine--tRNA ligase of Oleidesulfovibrio alaskensis (strain ATCC BAA-1058 / DSM 17464 / G20) (Desulfovibrio alaskensis).